The chain runs to 600 residues: Fructan 1-exohydrolase (600 aa).

A signal peptide spans 1–27 (MAQAWAFLLPVLFFGSYVTNLFLPTYA). Residue Asp73 is part of the active site. 3 N-linked (GlcNAc...) asparagine glycosylation sites follow: Asn166, Asn234, and Asn246. The cysteines at positions 444 and 490 are disulfide-linked. The N-linked (GlcNAc...) asparagine glycan is linked to Asn565.

Belongs to the glycosyl hydrolase 32 family.

It carries out the reaction Hydrolysis of terminal, non-reducing (2-&gt;1)-linked beta-D-fructofuranose residues in fructans.. With respect to regulation, inhibited by sucrose. Functionally, hydrolyzes inulin-type beta-(2,1)-fructans. May play a role as a beta-(2,1)-trimmer during graminan biosynthesis. The chain is Fructan 1-exohydrolase from Leymus chinensis (Chinese lyme grass).